The following is a 1067-amino-acid chain: Chitinase-like protein C25A8.4 (1067 aa).

An N-terminal signal peptide occupies residues 1-18; that stretch reads MGIKTLIWLSILVVGIYC. 3 consecutive GH18 domains span residues 26 to 364, 372 to 727, and 743 to 1067; these read PVHY…IRNT, CTRL…QVCQ, and FVVS…HKCR. A disulfide bridge connects residues C30 and C51. Residues N47 and N216 are each glycosylated (N-linked (GlcNAc...) asparagine). C376 and C397 are disulfide-bonded. N475, N538, and N710 each carry an N-linked (GlcNAc...) asparagine glycan. C747 and C768 are disulfide-bonded. N-linked (GlcNAc...) asparagine glycans are attached at residues N797 and N830. E855 (proton donor) is an active-site residue. Residues N887, N933, and N1010 are each glycosylated (N-linked (GlcNAc...) asparagine).

This sequence belongs to the glycosyl hydrolase 18 family.

The protein localises to the secreted. In terms of biological role, putative chitinase. The protein is Chitinase-like protein C25A8.4 (cht-3) of Caenorhabditis elegans.